We begin with the raw amino-acid sequence, 137 residues long: Large ribosomal subunit protein uL14 (137 aa).

Belongs to the universal ribosomal protein uL14 family. Part of the 50S ribosomal subunit. Forms a cluster with proteins L3 and L24e, part of which may contact the 16S rRNA in 2 intersubunit bridges.

Binds to 23S rRNA. Forms part of two intersubunit bridges in the 70S ribosome. This Ignicoccus hospitalis (strain KIN4/I / DSM 18386 / JCM 14125) protein is Large ribosomal subunit protein uL14.